Consider the following 159-residue polypeptide: Ribosomal RNA large subunit methyltransferase H (159 aa).

S-adenosyl-L-methionine-binding positions include leucine 76, glycine 108, and 127–132 (FSKMTF).

The protein belongs to the RNA methyltransferase RlmH family. Homodimer.

The protein resides in the cytoplasm. It carries out the reaction pseudouridine(1915) in 23S rRNA + S-adenosyl-L-methionine = N(3)-methylpseudouridine(1915) in 23S rRNA + S-adenosyl-L-homocysteine + H(+). Its function is as follows. Specifically methylates the pseudouridine at position 1915 (m3Psi1915) in 23S rRNA. The chain is Ribosomal RNA large subunit methyltransferase H from Exiguobacterium sp. (strain ATCC BAA-1283 / AT1b).